Reading from the N-terminus, the 261-residue chain is Cytochrome c oxidase subunit 3 (261 aa).

Residues 1-15 (MTHQTHAYHMVNPSP) lie on the Mitochondrial matrix side of the membrane. The helical transmembrane segment at 16-34 (WPLTGALSALLMTSGLIMW) threads the bilayer. Residues 35–40 (FHFNST) lie on the Mitochondrial intermembrane side of the membrane. A helical membrane pass occupies residues 41 to 66 (TLLMLGLTTNMLTMYQWWRDVVREST). Residues 67 to 72 (FQGHHT) are Mitochondrial matrix-facing. The chain crosses the membrane as a helical span at residues 73–105 (PNVQKGLRYGMILFIISEVLFFTGFFWAFYHSS). At 106-128 (LAPTPELGGCWPPTGINPLNPLE) the chain is on the mitochondrial intermembrane side. The helical transmembrane segment at 129–152 (VPLLNTSVLLASGVSITWAHHSLM) threads the bilayer. Residues 153–155 (EGN) lie on the Mitochondrial matrix side of the membrane. A helical membrane pass occupies residues 156–183 (RNHMLQALFITIALGVYFTLLQASEYYE). At 184 to 190 (APFTISD) the chain is on the mitochondrial intermembrane side. The helical transmembrane segment at 191–223 (GVYGSTFFVATGFHGLHVIIGSTFLIVCFFRQL) threads the bilayer. Residues 224 to 232 (KFHFTSNHH) are Mitochondrial matrix-facing. Residues 233 to 256 (FGFEAAAWYWHFVDVVWLFLYVSI) traverse the membrane as a helical segment. The Mitochondrial intermembrane portion of the chain corresponds to 257–261 (YWWGS).

Belongs to the cytochrome c oxidase subunit 3 family. In terms of assembly, component of the cytochrome c oxidase (complex IV, CIV), a multisubunit enzyme composed of 14 subunits. The complex is composed of a catalytic core of 3 subunits MT-CO1, MT-CO2 and MT-CO3, encoded in the mitochondrial DNA, and 11 supernumerary subunits COX4I, COX5A, COX5B, COX6A, COX6B, COX6C, COX7A, COX7B, COX7C, COX8 and NDUFA4, which are encoded in the nuclear genome. The complex exists as a monomer or a dimer and forms supercomplexes (SCs) in the inner mitochondrial membrane with NADH-ubiquinone oxidoreductase (complex I, CI) and ubiquinol-cytochrome c oxidoreductase (cytochrome b-c1 complex, complex III, CIII), resulting in different assemblies (supercomplex SCI(1)III(2)IV(1) and megacomplex MCI(2)III(2)IV(2)).

The protein resides in the mitochondrion inner membrane. The catalysed reaction is 4 Fe(II)-[cytochrome c] + O2 + 8 H(+)(in) = 4 Fe(III)-[cytochrome c] + 2 H2O + 4 H(+)(out). Functionally, component of the cytochrome c oxidase, the last enzyme in the mitochondrial electron transport chain which drives oxidative phosphorylation. The respiratory chain contains 3 multisubunit complexes succinate dehydrogenase (complex II, CII), ubiquinol-cytochrome c oxidoreductase (cytochrome b-c1 complex, complex III, CIII) and cytochrome c oxidase (complex IV, CIV), that cooperate to transfer electrons derived from NADH and succinate to molecular oxygen, creating an electrochemical gradient over the inner membrane that drives transmembrane transport and the ATP synthase. Cytochrome c oxidase is the component of the respiratory chain that catalyzes the reduction of oxygen to water. Electrons originating from reduced cytochrome c in the intermembrane space (IMS) are transferred via the dinuclear copper A center (CU(A)) of subunit 2 and heme A of subunit 1 to the active site in subunit 1, a binuclear center (BNC) formed by heme A3 and copper B (CU(B)). The BNC reduces molecular oxygen to 2 water molecules using 4 electrons from cytochrome c in the IMS and 4 protons from the mitochondrial matrix. The chain is Cytochrome c oxidase subunit 3 (MT-CO3) from Gazella leptoceros (Sand gazelle).